Here is a 680-residue protein sequence, read N- to C-terminus: MIDRYKHQQLRIGLVSPQQISAWANKTLPNGEIVGEVTKPYTFHYKTNKPEKDGLFCERIFGPIKSGICACGNYRVIGDKKEDSKFCEQCGVEFVDSRIRRYQMGYIKLACPVTHVWYLKRLPSYIANLLDKPLKELEGLVYCDFSFARPIAKKPTFLRLRGSFEYEIQSWKYSIPLFFTTQGFDTFRNREISTGAGAIREQLADLDLRLIIDYSLVEWKELGEEGPAGNEWEDRKVGRRKDFLVRRMELAKHFIRTNIEPEWMVLCLLPVLPPELRPIIQIDGGKLMSSDINELYRRVIYRNNTLIDLLTTSRSTPGELVMCQEKLVQEAVDTLLDNGIRGQPMRDGHNKVYKSFSDVIEGKEGRFRETLLGKRVDYSGRSVIVVGPSLSLHRCGLPREIAIELFQTFLIRGLIRQHFASNIGVAKSKIREKEPIVWEILQEVMQGHPVLLNRAPTLHRLGIQAFQPILVEGRAICLHPLVCKGFNADFDGDQMAVHVPLSLEAQAEARLLMFSHMNLLSSAIGDPISVPTQDMLIGLYVLTSGNRRGICANRYNPSNRKNHKNEKIYNNNYKYTKEPFFCNSYDAIGAYRQKRINLDSPLWLRWRLDQRVIASREAPIEVHYESLGTHHEIYGYYLIVKSIKKEILCIYIRTTVGHISLYREIEEAIQGFCRACSYGT.

Zn(2+) is bound by residues Cys-69, Cys-71, Cys-87, and Cys-90. Mg(2+) is bound by residues Asp-489, Asp-491, and Asp-493.

The protein belongs to the RNA polymerase beta' chain family. RpoC1 subfamily. As to quaternary structure, in plastids the minimal PEP RNA polymerase catalytic core is composed of four subunits: alpha, beta, beta', and beta''. When a (nuclear-encoded) sigma factor is associated with the core the holoenzyme is formed, which can initiate transcription. The cofactor is Mg(2+). It depends on Zn(2+) as a cofactor.

It is found in the plastid. It localises to the chloroplast. It catalyses the reaction RNA(n) + a ribonucleoside 5'-triphosphate = RNA(n+1) + diphosphate. Its function is as follows. DNA-dependent RNA polymerase catalyzes the transcription of DNA into RNA using the four ribonucleoside triphosphates as substrates. This is DNA-directed RNA polymerase subunit beta' from Cucumis sativus (Cucumber).